The following is a 271-amino-acid chain: Imidazole glycerol phosphate synthase subunit HisF (271 aa).

Active-site residues include aspartate 12 and aspartate 131.

The protein belongs to the HisA/HisF family. In terms of assembly, heterodimer of HisH and HisF.

It is found in the cytoplasm. The enzyme catalyses 5-[(5-phospho-1-deoxy-D-ribulos-1-ylimino)methylamino]-1-(5-phospho-beta-D-ribosyl)imidazole-4-carboxamide + L-glutamine = D-erythro-1-(imidazol-4-yl)glycerol 3-phosphate + 5-amino-1-(5-phospho-beta-D-ribosyl)imidazole-4-carboxamide + L-glutamate + H(+). Its pathway is amino-acid biosynthesis; L-histidine biosynthesis; L-histidine from 5-phospho-alpha-D-ribose 1-diphosphate: step 5/9. Its function is as follows. IGPS catalyzes the conversion of PRFAR and glutamine to IGP, AICAR and glutamate. The HisF subunit catalyzes the cyclization activity that produces IGP and AICAR from PRFAR using the ammonia provided by the HisH subunit. This is Imidazole glycerol phosphate synthase subunit HisF from Methanospirillum hungatei JF-1 (strain ATCC 27890 / DSM 864 / NBRC 100397 / JF-1).